The chain runs to 256 residues: Na(+)-translocating NADH-quinone reductase subunit E (256 aa).

A run of 6 helical transmembrane segments spans residues 1–21 (MWLG…AAFI), 50–70 (MSVA…HAFI), 83–103 (LASV…IAAF), 123–143 (GIFL…LFGI), 149–169 (FIPM…AIVI), and 189–209 (MGIS…LTGI). A compositionally biased stretch (polar residues) spans 229-249 (ENTTNPLKESSSKHQPSISKA). The segment at 229–256 (ENTTNPLKESSSKHQPSISKARTQRRSL) is disordered.

Belongs to the NqrDE/RnfAE family. Composed of six subunits; NqrA, NqrB, NqrC, NqrD, NqrE and NqrF.

It localises to the cell inner membrane. It carries out the reaction a ubiquinone + n Na(+)(in) + NADH + H(+) = a ubiquinol + n Na(+)(out) + NAD(+). In terms of biological role, NQR complex catalyzes the reduction of ubiquinone-1 to ubiquinol by two successive reactions, coupled with the transport of Na(+) ions from the cytoplasm to the periplasm. NqrA to NqrE are probably involved in the second step, the conversion of ubisemiquinone to ubiquinol. This chain is Na(+)-translocating NADH-quinone reductase subunit E, found in Chlamydia pneumoniae (Chlamydophila pneumoniae).